The chain runs to 329 residues: MIRIAIDAMGGDFGAEPIISGVIEALKEAEFKAVLVGDSNAIKPLIPQPYLKNIEFIEATEVISMSDGATDALKRKDSTIYKAVELLKEKEVDAVVSAGHSGATMSLATLRVGRLKNVSRPAIATLMPNSKETATLVLDVGANVDCRSEHLFQFAIMGEAYAKEILGRKEPKVGLLSNGEEESKGNEVSKEAFKLVSRLDSFVGNAEGNQIFDGSIDVMVCDGFMGNILLKTSEGVADAIGKIIKKQVKKSPLAMAGSVLMRKVFKTLKKQVSYDEYGGAPLLGVNGCVIISHGKSNSKAIKNAIFQAIKFANSNINKVIEEELSHFAR.

Belongs to the PlsX family. Homodimer. Probably interacts with PlsY.

The protein resides in the cytoplasm. It carries out the reaction a fatty acyl-[ACP] + phosphate = an acyl phosphate + holo-[ACP]. It functions in the pathway lipid metabolism; phospholipid metabolism. Functionally, catalyzes the reversible formation of acyl-phosphate (acyl-PO(4)) from acyl-[acyl-carrier-protein] (acyl-ACP). This enzyme utilizes acyl-ACP as fatty acyl donor, but not acyl-CoA. The polypeptide is Phosphate acyltransferase (Campylobacter concisus (strain 13826)).